A 232-amino-acid chain; its full sequence is Large ribosomal subunit protein uL1 (232 aa).

It belongs to the universal ribosomal protein uL1 family. Part of the 50S ribosomal subunit.

Its function is as follows. Binds directly to 23S rRNA. The L1 stalk is quite mobile in the ribosome, and is involved in E site tRNA release. Functionally, protein L1 is also a translational repressor protein, it controls the translation of the L11 operon by binding to its mRNA. This chain is Large ribosomal subunit protein uL1, found in Xanthobacter autotrophicus (strain ATCC BAA-1158 / Py2).